Reading from the N-terminus, the 385-residue chain is Histidinol-phosphate aminotransferase (385 aa).

An N6-(pyridoxal phosphate)lysine modification is found at Lys-235.

The protein belongs to the class-II pyridoxal-phosphate-dependent aminotransferase family. Histidinol-phosphate aminotransferase subfamily. As to quaternary structure, homodimer. The cofactor is pyridoxal 5'-phosphate.

It carries out the reaction L-histidinol phosphate + 2-oxoglutarate = 3-(imidazol-4-yl)-2-oxopropyl phosphate + L-glutamate. It functions in the pathway amino-acid biosynthesis; L-histidine biosynthesis; L-histidine from 5-phospho-alpha-D-ribose 1-diphosphate: step 7/9. In Nocardia farcinica (strain IFM 10152), this protein is Histidinol-phosphate aminotransferase.